A 230-amino-acid polypeptide reads, in one-letter code: Flagellar L-ring protein (230 aa).

The first 15 residues, 1–15 (MSRPPLLSSACLAAT), serve as a signal peptide directing secretion. A lipid anchor (N-palmitoyl cysteine) is attached at Cys-16. The S-diacylglycerol cysteine moiety is linked to residue Cys-16.

Belongs to the FlgH family. As to quaternary structure, the basal body constitutes a major portion of the flagellar organelle and consists of four rings (L,P,S, and M) mounted on a central rod.

The protein localises to the cell outer membrane. The protein resides in the bacterial flagellum basal body. In terms of biological role, assembles around the rod to form the L-ring and probably protects the motor/basal body from shearing forces during rotation. In Xanthomonas oryzae pv. oryzae (strain MAFF 311018), this protein is Flagellar L-ring protein.